Consider the following 498-residue polypeptide: ATP synthase subunit beta, chloroplastic (498 aa).

Position 6 is a phosphothreonine (Thr-6). Ser-13 bears the Phosphoserine mark. 172–179 serves as a coordination point for ATP; it reads GGAGVGKT.

Belongs to the ATPase alpha/beta chains family. As to quaternary structure, F-type ATPases have 2 components, CF(1) - the catalytic core - and CF(0) - the membrane proton channel. CF(1) has five subunits: alpha(3), beta(3), gamma(1), delta(1), epsilon(1). CF(0) has four main subunits: a(1), b(1), b'(1) and c(9-12).

The protein resides in the plastid. Its subcellular location is the chloroplast thylakoid membrane. The catalysed reaction is ATP + H2O + 4 H(+)(in) = ADP + phosphate + 5 H(+)(out). In terms of biological role, produces ATP from ADP in the presence of a proton gradient across the membrane. The catalytic sites are hosted primarily by the beta subunits. The protein is ATP synthase subunit beta, chloroplastic of Barbarea verna (Land cress).